A 313-amino-acid polypeptide reads, in one-letter code: D-alanine--D-alanine ligase (313 aa).

The ATP-grasp domain maps to 108–308; sequence KLVWQQTGVP…YSELVVKVLA (201 aa). 138-193 is a binding site for ATP; sequence VAKLGLPLFVKPASEGSSVAVLKVKTADALPAALSEAATHDKIVIVEKSIEGGGEY. 3 residues coordinate Mg(2+): Asp-262, Glu-275, and Asn-277.

The protein belongs to the D-alanine--D-alanine ligase family. It depends on Mg(2+) as a cofactor. Requires Mn(2+) as cofactor.

It is found in the cytoplasm. It carries out the reaction 2 D-alanine + ATP = D-alanyl-D-alanine + ADP + phosphate + H(+). Its pathway is cell wall biogenesis; peptidoglycan biosynthesis. In terms of biological role, cell wall formation. This chain is D-alanine--D-alanine ligase, found in Burkholderia ambifaria (strain ATCC BAA-244 / DSM 16087 / CCUG 44356 / LMG 19182 / AMMD) (Burkholderia cepacia (strain AMMD)).